An 827-amino-acid chain; its full sequence is N-terminal kinase-like protein (827 aa).

In terms of domain architecture, Protein kinase spans 1–309 (MWFWSRDPAR…PEDFCRHKIL (309 aa)). 3 HEAT repeats span residues 345–383 (IIPV…VNAQ), 384–422 (IFPH…LNME), and 502–540 (VLPV…EDPS). The span at 586 to 624 (DAAASEGASAPSTASEASKPDTAPSSSAPPAAASTAPTS) shows a compositional bias: low complexity. Residues 586–827 (DAAASEGASA…PLKLGVRKLD (242 aa)) are disordered. A compositionally biased stretch (basic and acidic residues) spans 630 to 640 (EKGAPDNSLDR). The span at 641–652 (WDDEDWGSLEDA) shows a compositional bias: acidic residues. Residues 667-678 (DWGHGKTQEKTV) show a composition bias toward basic and acidic residues. Polar residues-rich tracts occupy residues 679 to 690 (DFSSSRSKTKQV) and 737 to 746 (NWDTSGSSGR). The segment covering 774 to 783 (GGDDNWESVE) has biased composition (acidic residues). Positions 788–817 (LSKAEMARKKREERQKEIEAKRAERRAAKG) form a coiled coil. Basic and acidic residues predominate over residues 792-814 (EMARKKREERQKEIEAKRAERRA).

The protein belongs to the protein kinase superfamily.

In terms of biological role, regulates COPI-mediated retrograde protein traffic at the interface between the Golgi apparatus and the endoplasmic reticulum. Involved in the maintenance of the Golgi apparatus morphology. The chain is N-terminal kinase-like protein (scyl1) from Xenopus tropicalis (Western clawed frog).